A 63-amino-acid chain; its full sequence is Large ribosomal subunit protein bL35 (63 aa).

This sequence belongs to the bacterial ribosomal protein bL35 family.

The polypeptide is Large ribosomal subunit protein bL35 (Campylobacter fetus subsp. fetus (strain 82-40)).